Reading from the N-terminus, the 510-residue chain is D-alanine--D-alanyl carrier protein ligase (510 aa).

157–158 is a binding site for ATP; the sequence is TS. D202 lines the D-alanine pocket. 297 to 302 lines the ATP pocket; the sequence is NTYGPT. V306 contacts D-alanine. ATP contacts are provided by D389 and K498. Residue K498 coordinates D-alanine.

This sequence belongs to the ATP-dependent AMP-binding enzyme family. DltA subfamily.

The protein resides in the cytoplasm. It carries out the reaction holo-[D-alanyl-carrier protein] + D-alanine + ATP = D-alanyl-[D-alanyl-carrier protein] + AMP + diphosphate. The protein operates within cell wall biogenesis; lipoteichoic acid biosynthesis. Functionally, catalyzes the first step in the D-alanylation of lipoteichoic acid (LTA), the activation of D-alanine and its transfer onto the D-alanyl carrier protein (Dcp) DltC. In an ATP-dependent two-step reaction, forms a high energy D-alanyl-AMP intermediate, followed by transfer of the D-alanyl residue as a thiol ester to the phosphopantheinyl prosthetic group of the Dcp. D-alanylation of LTA plays an important role in modulating the properties of the cell wall in Gram-positive bacteria, influencing the net charge of the cell wall. The protein is D-alanine--D-alanyl carrier protein ligase of Listeria monocytogenes serotype 4b (strain CLIP80459).